The primary structure comprises 381 residues: Creatine kinase M-type (381 aa).

One can recognise a Phosphagen kinase N-terminal domain in the interval 11–98 (KLNYKPQEEY…FDPIIQDRHG (88 aa)). The region spanning 125-367 (YVLSSRVRTG…KLMVEMEKKL (243 aa)) is the Phosphagen kinase C-terminal domain. 128–132 (SSRVR) serves as a coordination point for ATP. Ser-164 is subject to Phosphoserine. Thr-166 carries the phosphothreonine modification. Phosphoserine is present on Ser-178. A Phosphothreonine modification is found at Thr-180. His-191 serves as a coordination point for ATP. Ser-199 is modified (phosphoserine). Residues Arg-236 and Arg-292 each contribute to the ATP site. Thr-313 and Thr-322 each carry phosphothreonine. ATP contacts are provided by residues 320–325 (RGTGGV) and Asp-335. At Ser-372 the chain carries Phosphoserine.

The protein belongs to the ATP:guanido phosphotransferase family. In terms of assembly, dimer of identical or non-identical chains, which can be either B (brain type) or M (muscle type). With MM being the major form in skeletal muscle and myocardium, MB existing in myocardium, and BB existing in many tissues, especially brain.

Its subcellular location is the cytoplasm. It catalyses the reaction creatine + ATP = N-phosphocreatine + ADP + H(+). Its function is as follows. Reversibly catalyzes the transfer of phosphate between ATP and various phosphogens (e.g. creatine phosphate). Creatine kinase isoenzymes play a central role in energy transduction in tissues with large, fluctuating energy demands, such as skeletal muscle, heart, brain and spermatozoa. This Mus musculus (Mouse) protein is Creatine kinase M-type (Ckm).